Here is a 609-residue protein sequence, read N- to C-terminus: UvrABC system protein C (609 aa).

The GIY-YIG domain maps to 19-97; the sequence is ASPGCYLWKS…IKKHNPRFNV (79 aa). In terms of domain architecture, UVR spans 208–243; sequence ESLVSDLNIKMSNASERLDFEKAARYRDMLQRIQNF.

The protein belongs to the UvrC family. Interacts with UvrB in an incision complex.

The protein resides in the cytoplasm. The UvrABC repair system catalyzes the recognition and processing of DNA lesions. UvrC both incises the 5' and 3' sides of the lesion. The N-terminal half is responsible for the 3' incision and the C-terminal half is responsible for the 5' incision. The polypeptide is UvrABC system protein C (Leptospira interrogans serogroup Icterohaemorrhagiae serovar Lai (strain 56601)).